Reading from the N-terminus, the 149-residue chain is MPRLAMNVQYASEWDSLPNEKQFRKWARAALRVDTEATLRIVDEEEGRMLNRDYRGKDYATNVLTFPLEEEPWLVGDIILCAPVVAREAAEQNITLESHYAHLTVHGILHMHGYDHEDEHQAELMESIESFTMIQLGYPDPYSSEKRKR.

Residues His-106, His-110, and His-116 each coordinate Zn(2+).

This sequence belongs to the endoribonuclease YbeY family. It depends on Zn(2+) as a cofactor.

The protein resides in the cytoplasm. Functionally, single strand-specific metallo-endoribonuclease involved in late-stage 70S ribosome quality control and in maturation of the 3' terminus of the 16S rRNA. This chain is Endoribonuclease YbeY, found in Methylobacillus flagellatus (strain ATCC 51484 / DSM 6875 / VKM B-1610 / KT).